The primary structure comprises 245 residues: Tetraspanin-6 (245 aa).

Topologically, residues 1–19 (MASPSRRLQTKPVITCFKS) are cytoplasmic. The chain crosses the membrane as a helical span at residues 20 to 40 (VLLIYTFIFWITGVILLAVGI). Topologically, residues 41 to 59 (WGKVSLENYFSLLNEKATN) are extracellular. The chain crosses the membrane as a helical span at residues 60–80 (VPFVLIGTGTVIILLGTFGCF). At 81–93 (ATCRASAWMLKLY) the chain is on the cytoplasmic side. A helical transmembrane segment spans residues 94 to 114 (AMFLTLIFLVELVAAIIGFVF). Over 115–208 (RHEIKNSLKN…IMVMTIIESE (94 aa)) the chain is Extracellular. An N-linked (GlcNAc...) asparagine glycan is attached at N134. Residues 209 to 229 (MGVVAGISFGVACFQLIGIFL) form a helical membrane-spanning segment. At 230–245 (AYCLSRAITNNQYEIV) the chain is on the cytoplasmic side.

This sequence belongs to the tetraspanin (TM4SF) family.

It is found in the membrane. The sequence is that of Tetraspanin-6 (TSPAN6) from Bos taurus (Bovine).